A 141-amino-acid polypeptide reads, in one-letter code: ATP synthase epsilon chain (141 aa).

This sequence belongs to the ATPase epsilon chain family. In terms of assembly, F-type ATPases have 2 components, CF(1) - the catalytic core - and CF(0) - the membrane proton channel. CF(1) has five subunits: alpha(3), beta(3), gamma(1), delta(1), epsilon(1). CF(0) has three main subunits: a, b and c.

The protein localises to the cell inner membrane. In terms of biological role, produces ATP from ADP in the presence of a proton gradient across the membrane. This chain is ATP synthase epsilon chain, found in Aromatoleum aromaticum (strain DSM 19018 / LMG 30748 / EbN1) (Azoarcus sp. (strain EbN1)).